The chain runs to 146 residues: Hemoglobin subunit beta (146 aa).

Val1 bears the N-acetylvaline mark. Residues 2 to 146 (HLTGEEKAAV…VANALAHKYH (145 aa)) enclose the Globin domain. Thr12 is subject to Phosphothreonine. Position 44 is a phosphoserine (Ser44). Lys59 carries the N6-acetyllysine modification. Position 63 (His63) interacts with heme b. An N6-acetyllysine modification is found at Lys82. Residue His92 coordinates heme b. Cys93 is subject to S-nitrosocysteine. Lys144 bears the N6-acetyllysine mark.

Belongs to the globin family. As to quaternary structure, heterotetramer of two alpha chains and two beta chains. In terms of tissue distribution, red blood cells.

Its function is as follows. Involved in oxygen transport from the lung to the various peripheral tissues. This Lutra lutra (European river otter) protein is Hemoglobin subunit beta (HBB).